The sequence spans 638 residues: Cytoplasmic dynein 1 intermediate chain 2 (638 aa).

Composition is skewed to basic and acidic residues over residues 1–13 (MSDK…ELER) and 20–43 (QIRE…KKEA). 2 disordered regions span residues 1–135 (MSDK…GRGP) and 155–214 (TYTK…EEKQ). S2 carries the N-acetylserine modification. A Diphosphoserine modification is found at S51. Residues S51, S73, W81, P84, and S90 each carry the phosphoserine modification. Residues 88 to 97 (PSSKSVSTPS) are compositionally biased toward low complexity. T95 is subject to Phosphothreonine. 3 positions are modified to phosphoserine: S97, S101, and S104. A compositionally biased stretch (basic and acidic residues) spans 190 to 214 (EKTLKKDEENDSKAPPHELTEEEKQ). WD repeat units lie at residues 277-326 (SKHR…TTPE), 330-370 (HCQS…RTPV), 379-420 (AHTH…HPQD), 429-469 (SKAV…AGIS), 474-519 (GHQG…PLYS), 522-562 (DNAD…EVPT), and 568-607 (EGNP…AVPR).

It belongs to the dynein intermediate chain family. In terms of assembly, homodimer. The cytoplasmic dynein 1 complex consists of two catalytic heavy chains (HCs) and a number of non-catalytic subunits presented by intermediate chains (ICs), light intermediate chains (LICs) and light chains (LCs); the composition seems to vary in respect to the IC, LIC and LC composition. The heavy chain homodimer serves as a scaffold for the probable homodimeric assembly of the respective non-catalytic subunits. The ICs and LICs bind directly to the HC dimer and the LCs assemble on the IC dimer. Interacts with DYNLT3. Interacts with DYNLT1. Interacts (dephosphorylated at Ser-90) with DCTN1. Interacts with BICD2. Interacts with SPEF2. Interacts with CFAP61. (Microbial infection) Interacts with human adenovirus 5 hexon protein; this interaction probably allows virus intracellular transport. In terms of processing, the phosphorylation status of Ser-90 appears to be involved in dynactin-dependent target binding. Pyrophosphorylation by 5-diphosphoinositol pentakisphosphate (5-IP7) promotes interaction with DCTN1. Serine pyrophosphorylation is achieved by Mg(2+)-dependent, but enzyme independent transfer of a beta-phosphate from a inositol pyrophosphate to a pre-phosphorylated serine residue.

It localises to the cytoplasm. The protein resides in the cytoskeleton. Functionally, acts as one of several non-catalytic accessory components of the cytoplasmic dynein 1 complex that are thought to be involved in linking dynein to cargos and to adapter proteins that regulate dynein function. Cytoplasmic dynein 1 acts as a motor for the intracellular retrograde motility of vesicles and organelles along microtubules. The intermediate chains mediate the binding of dynein to dynactin via its 150 kDa component (p150-glued) DCTN1. Involved in membrane-transport, such as Golgi apparatus, late endosomes and lysosomes. In Homo sapiens (Human), this protein is Cytoplasmic dynein 1 intermediate chain 2.